Here is a 261-residue protein sequence, read N- to C-terminus: Ribonuclease HII (261 aa).

Positions 71–259 (QYIAGVDEVG…VKEAKLHFES (189 aa)) constitute an RNase H type-2 domain. Aspartate 77, glutamate 78, and aspartate 169 together coordinate a divalent metal cation.

The protein belongs to the RNase HII family. Mn(2+) is required as a cofactor. Requires Mg(2+) as cofactor.

It localises to the cytoplasm. It catalyses the reaction Endonucleolytic cleavage to 5'-phosphomonoester.. Endonuclease that specifically degrades the RNA of RNA-DNA hybrids. This is Ribonuclease HII from Listeria innocua serovar 6a (strain ATCC BAA-680 / CLIP 11262).